Reading from the N-terminus, the 262-residue chain is Glucosamine-6-phosphate deaminase (262 aa).

Asp-63 serves as the catalytic Proton acceptor; for enolization step. Catalysis depends on Asn-129, which acts as the For ring-opening step. The Proton acceptor; for ring-opening step role is filled by His-131. The For ring-opening step role is filled by Glu-136.

The protein belongs to the glucosamine/galactosamine-6-phosphate isomerase family. NagB subfamily.

It carries out the reaction alpha-D-glucosamine 6-phosphate + H2O = beta-D-fructose 6-phosphate + NH4(+). Its pathway is amino-sugar metabolism; N-acetylneuraminate degradation; D-fructose 6-phosphate from N-acetylneuraminate: step 5/5. Catalyzes the reversible isomerization-deamination of glucosamine 6-phosphate (GlcN6P) to form fructose 6-phosphate (Fru6P) and ammonium ion. The sequence is that of Glucosamine-6-phosphate deaminase from Bacillus cereus (strain ZK / E33L).